A 557-amino-acid polypeptide reads, in one-letter code: MSLIKKKNKNIRIIPLGGVGEIAKNMYIVEVDDEMFMLDAGLMFPEDEMLGVDIVIPDIQYVIENKEKLKGIFLTHGHEHAIGAVTYVLEQVDAPVYGSKLTIALIKENMKARNVNKKVRYYTVNNESVMRFKGVNVTFFNTTHSIPDSLGICIHTSYGAIVYTGEFKFDQSLHGHYAPDLKKMTEIGEAGVFALISDSTEAEKPGYNTPENVIESHMYDAFTKVKGRLIVSCYASNFIRIQQVLNLAQRLNRKVSFLGRSLESSFNIARKMGYFDISKDLLIPINEVENYPKNEVIIIATGMQGEPVEALSQMAQKKHKIMNIEPGDSVFLTITASANMEVIVGNTLNELVRAGAEIIPNSKKIHASSHGCMEELKMMINIMKPEYFIPVNGEFKMQISHAKLANEAGVQPEKIFLVEKGDVVNYDGEEMILNEKVNSGNVLIDGIGVGDVGNIVLRDRHLLAEDGIFIAVVTLDPKNRRIAAGPEIQSRGFVYVRESEALLNEAEEKVREIVELGLQEKRIEWSEIKQSMRDQISKLLFENTKRRPMIIPVISEI.

Zn(2+) is bound by residues His76, His78, His144, and Glu166. 366-370 contacts substrate; the sequence is HASSH.

Belongs to the metallo-beta-lactamase superfamily. RNA-metabolizing metallo-beta-lactamase-like family. Bacterial RNase J subfamily. In terms of assembly, homodimer, may be a subunit of the RNA degradosome. Requires Zn(2+) as cofactor.

Its subcellular location is the cytoplasm. An RNase that has 5'-3' exonuclease and possibly endoonuclease activity. Involved in maturation of rRNA and in some organisms also mRNA maturation and/or decay. The protein is Ribonuclease J 2 of Staphylococcus saprophyticus subsp. saprophyticus (strain ATCC 15305 / DSM 20229 / NCIMB 8711 / NCTC 7292 / S-41).